Consider the following 118-residue polypeptide: Large ribosomal subunit protein bL20 (118 aa).

The protein belongs to the bacterial ribosomal protein bL20 family.

Functionally, binds directly to 23S ribosomal RNA and is necessary for the in vitro assembly process of the 50S ribosomal subunit. It is not involved in the protein synthesizing functions of that subunit. The protein is Large ribosomal subunit protein bL20 of Hahella chejuensis (strain KCTC 2396).